Here is a 359-residue protein sequence, read N- to C-terminus: Stearoyl-CoA desaturase (359 aa).

Over 1–72 (MPAHLLQEEI…EGPKPKLEYV (72 aa)) the chain is Cytoplasmic. Residues 73–93 (WRNIILMGLLHLGALYGITLI) traverse the membrane as a helical segment. Residue Asn75 coordinates substrate. Topologically, residues 94 to 97 (PTCK) are lumenal. The chain crosses the membrane as a helical span at residues 98-118 (IYTFLWVLFYYMMSALGITAG). Topologically, residues 119-217 (VHRLWSHRTY…EKLVMFQRRY (99 aa)) are cytoplasmic. His120 and His125 together coordinate Fe cation. The Histidine box-1 motif lies at 120–125 (HRLWSH). Substrate-binding residues include Asn148, Arg155, and Asp156. Positions 157, 160, and 161 each coordinate Fe cation. The Histidine box-2 signature appears at 157 to 161 (HRAHH). Positions 188 and 189 each coordinate substrate. Ser203 carries the post-translational modification Phosphoserine. Residues 218 to 237 (YKPGVLLLCFILPTLVPWYL) form a helical membrane-spanning segment. Residues 238–241 (WGET) lie on the Lumenal side of the membrane. The helical transmembrane segment at 242-263 (FQNSLFFATLLRYAVVLNATWL) threads the bilayer. Trp262 serves as a coordination point for substrate. At 264-359 (VNSAAHMYGY…RTGEESCKSG (96 aa)) the chain is on the cytoplasmic side. Residues His269, His298, His301, and His302 each coordinate Fe cation. The short motif at 298–302 (HNYHH) is the Histidine box-3 element.

Belongs to the fatty acid desaturase type 1 family. The cofactor is Fe(2+).

The protein localises to the endoplasmic reticulum membrane. The catalysed reaction is octadecanoyl-CoA + 2 Fe(II)-[cytochrome b5] + O2 + 2 H(+) = (9Z)-octadecenoyl-CoA + 2 Fe(III)-[cytochrome b5] + 2 H2O. It catalyses the reaction hexadecanoyl-CoA + 2 Fe(II)-[cytochrome b5] + O2 + 2 H(+) = (9Z)-hexadecenoyl-CoA + 2 Fe(III)-[cytochrome b5] + 2 H2O. Its function is as follows. Stearoyl-CoA desaturase that utilizes O(2) and electrons from reduced cytochrome b5 to introduce the first double bond into saturated fatty acyl-CoA substrates. Catalyzes the insertion of a cis double bond at the delta-9 position into fatty acyl-CoA substrates including palmitoyl-CoA and stearoyl-CoA. Gives rise to a mixture of 16:1 and 18:1 unsaturated fatty acids. Plays an important role in lipid biosynthesis. Plays an important role in regulating the expression of genes that are involved in lipogenesis and in regulating mitochondrial fatty acid oxidation. Plays an important role in body energy homeostasis. Contributes to the biosynthesis of membrane phospholipids, cholesterol esters and triglycerides. The chain is Stearoyl-CoA desaturase (SCD) from Capra hircus (Goat).